A 418-amino-acid chain; its full sequence is D-inositol 3-phosphate glycosyltransferase 1 (418 aa).

UDP-N-acetyl-alpha-D-glucosamine contacts are provided by residues 24 to 25 (QP) and G32. Residues 29–34 (DAGGLN), K87, H115, S139, and Q159 each bind 1D-myo-inositol 3-phosphate. UDP-N-acetyl-alpha-D-glucosamine contacts are provided by R233 and K238. 3 residues coordinate Mg(2+): Y308, R309, and A311. Residues E321 and E329 each coordinate UDP-N-acetyl-alpha-D-glucosamine. Position 335 (T335) interacts with Mg(2+).

Belongs to the glycosyltransferase group 1 family. MshA subfamily. Homodimer.

The catalysed reaction is 1D-myo-inositol 3-phosphate + UDP-N-acetyl-alpha-D-glucosamine = 1D-myo-inositol 2-acetamido-2-deoxy-alpha-D-glucopyranoside 3-phosphate + UDP + H(+). In terms of biological role, catalyzes the transfer of a N-acetyl-glucosamine moiety to 1D-myo-inositol 3-phosphate to produce 1D-myo-inositol 2-acetamido-2-deoxy-glucopyranoside 3-phosphate in the mycothiol biosynthesis pathway. The sequence is that of D-inositol 3-phosphate glycosyltransferase 1 from Catenulispora acidiphila (strain DSM 44928 / JCM 14897 / NBRC 102108 / NRRL B-24433 / ID139908).